A 123-amino-acid chain; its full sequence is Large ribosomal subunit protein uL29 (123 aa).

Residues 84-123 are disordered; the sequence is RPKKTRAMRRRLNKHEEGLKTKKQQRKERLYPPRKYAVKA. Residues 86–96 are compositionally biased toward basic residues; that stretch reads KKTRAMRRRLN.

It belongs to the universal ribosomal protein uL29 family. In terms of assembly, component of the large ribosomal subunit.

Its subcellular location is the cytoplasm. Its function is as follows. Component of the large ribosomal subunit. The ribosome is a large ribonucleoprotein complex responsible for the synthesis of proteins in the cell. The chain is Large ribosomal subunit protein uL29 (RPL35) from Ophiophagus hannah (King cobra).